The following is a 316-amino-acid chain: Chorismate mutase 3, chloroplastic (316 aa).

Residues 1–47 (MEAKLLKPAFYNSPNLNLTNSSRLISRLSIWNDKSKVGLSSGSLFLR) constitute a chloroplast transit peptide. R62 contacts L-phenylalanine. One can recognise a Chorismate mutase domain in the interval 62-316 (RVDESEYLKL…QIEYLLRRLD (255 aa)). Residues R133 and 194–197 (NCGS) each bind L-tyrosine. 194–197 (NCGS) provides a ligand contact to L-phenylalanine.

As to quaternary structure, homodimer. Expressed in roots, stems, cauline leaves, flowers and siliques, and at lower levels in rosette leaves.

Its subcellular location is the plastid. The protein localises to the chloroplast. It catalyses the reaction chorismate = prephenate. The protein operates within metabolic intermediate biosynthesis; prephenate biosynthesis; prephenate from chorismate: step 1/1. Allosterically inhibited by tyrosine and phenylalanine. According to another report, seems not to be repressed by tyrosine and phenylalanine. Activated by tryptophan, cysteine and histidine. Its function is as follows. May play a role in chloroplast biogenesis. In Arabidopsis thaliana (Mouse-ear cress), this protein is Chorismate mutase 3, chloroplastic.